The primary structure comprises 365 residues: tRNA/tmRNA (uracil-C(5))-methyltransferase (365 aa).

The S-adenosyl-L-methionine site is built by glutamine 189, tyrosine 217, asparagine 222, glutamate 238, and aspartate 298. Cysteine 323 acts as the Nucleophile in catalysis. Catalysis depends on glutamate 357, which acts as the Proton acceptor.

It belongs to the class I-like SAM-binding methyltransferase superfamily. RNA M5U methyltransferase family. TrmA subfamily.

The catalysed reaction is uridine(54) in tRNA + S-adenosyl-L-methionine = 5-methyluridine(54) in tRNA + S-adenosyl-L-homocysteine + H(+). It carries out the reaction uridine(341) in tmRNA + S-adenosyl-L-methionine = 5-methyluridine(341) in tmRNA + S-adenosyl-L-homocysteine + H(+). Its function is as follows. Dual-specificity methyltransferase that catalyzes the formation of 5-methyluridine at position 54 (m5U54) in all tRNAs, and that of position 341 (m5U341) in tmRNA (transfer-mRNA). The chain is tRNA/tmRNA (uracil-C(5))-methyltransferase from Saccharophagus degradans (strain 2-40 / ATCC 43961 / DSM 17024).